The primary structure comprises 1346 residues: Toll-like receptor Tollo (1346 aa).

Residues 1–21 (MLATTHMLYVLIATCVIPIFG) form the signal peptide. The Extracellular portion of the chain corresponds to 22–1021 (AALSKTVLYQ…NQPPKLDYIP (1000 aa)). 3 N-linked (GlcNAc...) asparagine glycosylation sites follow: Asn-63, Asn-112, and Asn-126. LRR repeat units lie at residues 97 to 120 (LVELRDLTIEYCKLGNLTDGSFRG), 124 to 146 (LRNLTIRTHNGDWSTMSLEMASN), 151 to 174 (FRQLERLDLSLNNIWLIPDGMVCP), 176 to 198 (KSLQHLNASYNKIQDISNFYFSA), 209 to 232 (GSTLQSLDLSANKMVSLPTAMLSA), 234 to 256 (GRLTHLNMAKNSMSFLADRAFEG), 257 to 280 (LLSLRVVDLSANRLTSLPPELFAE), 282 to 304 (KQLQEIYLRNNSINVLAPGIFGE), 306 to 330 (AELLVLDLASNELNSQWINAATFVG), 331 to 354 (LKRLMMLDLSANKISRLEAHIFRP), 355 to 378 (LASLQILKLEDNYIDQLPGGIFAD), 380 to 402 (TNLHTLILSRNRISVIEQRTLQG), 404 to 426 (KNLLVLSLDFNRISRMDQRSLVN), 427 to 450 (CSQLQDLHLNDNKLQAVPEALAHV), 452 to 473 (LLKTLDVGENMISQIENTSITQ), 474 to 497 (LESLYGLRMTENSLTHIRRGVFDR), 498 to 521 (MSSLQILNLSQNKLKSIEAGSLQR), 523 to 544 (SQLQAIRLDGNQLKSIAGLFTE), 546 to 568 (PNLVWLNISGNRLEKFDYSHIPI), 570 to 591 (LQWLDVRANRITQLGNYFEIES), 593 to 614 (LSLSTFDASYNLLTEITASSIP), 615 to 637 (NSVEVLYLNDNQISKIQPYTFFK), and 638 to 661 (KPNLTRVDLVRNRLTTLEPNALRL). A glycan (N-linked (GlcNAc...) asparagine) is linked at Asn-182. Asn-291 is a glycosylation site (N-linked (GlcNAc...) asparagine). Asn-426 carries N-linked (GlcNAc...) asparagine glycosylation. The N-linked (GlcNAc...) asparagine glycan is linked to Asn-468. Residue Asn-505 is glycosylated (N-linked (GlcNAc...) asparagine). Residue Asn-552 is glycosylated (N-linked (GlcNAc...) asparagine). Asn-640 carries an N-linked (GlcNAc...) asparagine glycan. Cystine bridges form between Cys-682/Cys-710, Cys-684/Cys-733, Cys-757/Cys-763, and Cys-761/Cys-776. LRR repeat units lie at residues 790-813 (PMDSTQLYLDGNNFRELQSHAFIG), 814-837 (RKRLKVLHLNHSRIEVLHNRTFYG), 838-861 (LLELEVLQLQSNQLKALNGNEFQG), 863-885 (DNLQELYLQHNAIATIDTLTFTH), 887-909 (YHLKILRLDHNAITSFAVWNFLP), and 912-938 (LNELRLASNPWTCSCEFIDKLRDYINR). N-linked (GlcNAc...) asparagine glycosylation is found at Asn-823 and Asn-832. Cys-924 and Cys-950 are oxidised to a cystine. Asn-956 and Asn-1000 each carry an N-linked (GlcNAc...) asparagine glycan. Residues 1022-1042 (ILVAILTAFIFVMICISLVFI) form a helical membrane-spanning segment. Topologically, residues 1043-1346 (FRQEMRVWCH…PTPASRNLHM (304 aa)) are cytoplasmic. One can recognise a TIR domain in the interval 1074–1209 (KLFDAFVSYS…LFWQKLRFAL (136 aa)). The interval 1235–1346 (HHHHHVHQQA…PTPASRNLHM (112 aa)) is disordered. A compositionally biased stretch (low complexity) spans 1267–1300 (PGSFRRQPSLHQQQQQQQQIRGNNNTTQQQQQQQ).

The protein belongs to the Toll-like receptor family. As to quaternary structure, may interact (via the extracellular domain) with 18w (via the extracellular domain).

The protein localises to the cell membrane. It is found in the apical cell membrane. Its function is as follows. Toll-related receptor. Probably specific to larval innate immunity. Involved in the tracheal immune response of larvae to Gram-negative and perhaps Gram-positive bacteria; upon infection it negatively regulates the immune deficiency (Imd) signaling cascade specifically in the respiratory epithelium to prevent the overexpression of antimicrobial peptides (AMP). Involved in the NF-kappa-B-dependent apoptosis of unfit cells during cell competition. Involved in neuron-specific glycosylation. Positively controls the neuromuscular junction (NMJ) growth in presynaptic motorneurons, probably via the JNK pathway. During development of the peripheral nervous system, may function in the NF-kappa-B (rel) regulatory cascade to repress expression of the neuron-specific genes sc and ase in non-neuronal cells. Promotes heterophilic cell adhesion with 18w in vitro. May have a minor role in leg development. May be involved in determining the proximal cell fate in the wing, possibly by negatively regulating the Dpp signaling pathway. May also be involved in the Dpp signaling pathway in the eye. Possibly functions with 18w and Toll-6 during convergent extension, to help direct proper planar cell polarity, cell intercalation and axis elongation. This chain is Toll-like receptor Tollo, found in Drosophila melanogaster (Fruit fly).